The primary structure comprises 289 residues: tRNA pseudouridine synthase B (289 aa).

The active-site Nucleophile is the Asp-38.

Belongs to the pseudouridine synthase TruB family. Type 1 subfamily.

The catalysed reaction is uridine(55) in tRNA = pseudouridine(55) in tRNA. Functionally, responsible for synthesis of pseudouridine from uracil-55 in the psi GC loop of transfer RNAs. The sequence is that of tRNA pseudouridine synthase B from Clostridium novyi (strain NT).